Here is a 256-residue protein sequence, read N- to C-terminus: Small ribosomal subunit protein eS1 (256 aa).

The residue at position 2 (Ala-2) is an N-acetylalanine; partial.

The protein belongs to the eukaryotic ribosomal protein eS1 family. As to quaternary structure, component of the small ribosomal subunit. Mature ribosomes consist of a small (40S) and a large (60S) subunit. The 40S subunit contains about 33 different proteins and 1 molecule of RNA (18S). The 60S subunit contains about 49 different proteins and 3 molecules of RNA (25S, 5.8S and 5S).

It is found in the cytoplasm. The chain is Small ribosomal subunit protein eS1 from Eremothecium gossypii (strain ATCC 10895 / CBS 109.51 / FGSC 9923 / NRRL Y-1056) (Yeast).